The following is a 678-amino-acid chain: UvrABC system protein B (678 aa).

Residues 26–185 enclose the Helicase ATP-binding domain; that stretch reads EGLEDGEAFQ…LTTMQYTRND (160 aa). 39–46 is a binding site for ATP; that stretch reads GVTGSGKT. Positions 92–115 match the Beta-hairpin motif; it reads YYDYYQPEAYVPASDTYIAKDSSV. In terms of domain architecture, Helicase C-terminal spans 430 to 596; sequence QVDDLLGEIR…KLNKKITDIL (167 aa). The disordered stretch occupies residues 597 to 630; that stretch reads EDSPYAPKPGASAAKLKAAEADGEYSPQEMQRMT. Residues 635 to 670 form the UVR domain; the sequence is ASEIKRMEKQMYQAAKDLDFELAAKLRDDLKRLKSS.

It belongs to the UvrB family. As to quaternary structure, forms a heterotetramer with UvrA during the search for lesions. Interacts with UvrC in an incision complex.

It localises to the cytoplasm. Its function is as follows. The UvrABC repair system catalyzes the recognition and processing of DNA lesions. A damage recognition complex composed of 2 UvrA and 2 UvrB subunits scans DNA for abnormalities. Upon binding of the UvrA(2)B(2) complex to a putative damaged site, the DNA wraps around one UvrB monomer. DNA wrap is dependent on ATP binding by UvrB and probably causes local melting of the DNA helix, facilitating insertion of UvrB beta-hairpin between the DNA strands. Then UvrB probes one DNA strand for the presence of a lesion. If a lesion is found the UvrA subunits dissociate and the UvrB-DNA preincision complex is formed. This complex is subsequently bound by UvrC and the second UvrB is released. If no lesion is found, the DNA wraps around the other UvrB subunit that will check the other stand for damage. The protein is UvrABC system protein B of Hydrogenovibrio crunogenus (strain DSM 25203 / XCL-2) (Thiomicrospira crunogena).